The primary structure comprises 419 residues: Synaptosomal-associated protein 47 (419 aa).

2 t-SNARE coiled-coil homology domains span residues 108 to 170 (PQGA…LSEL) and 356 to 418 (VLQP…MRKL).

Belongs to the SVAP1 family.

Functionally, may play a role in intracellular membrane fusion. This chain is Synaptosomal-associated protein 47 (snap47), found in Danio rerio (Zebrafish).